We begin with the raw amino-acid sequence, 556 residues long: 2-succinyl-5-enolpyruvyl-6-hydroxy-3-cyclohexene-1-carboxylate synthase (556 aa).

This sequence belongs to the TPP enzyme family. MenD subfamily. Homodimer. The cofactor is Mg(2+). Mn(2+) is required as a cofactor. Thiamine diphosphate serves as cofactor.

The enzyme catalyses isochorismate + 2-oxoglutarate + H(+) = 5-enolpyruvoyl-6-hydroxy-2-succinyl-cyclohex-3-ene-1-carboxylate + CO2. It participates in quinol/quinone metabolism; 1,4-dihydroxy-2-naphthoate biosynthesis; 1,4-dihydroxy-2-naphthoate from chorismate: step 2/7. The protein operates within quinol/quinone metabolism; menaquinone biosynthesis. In terms of biological role, catalyzes the thiamine diphosphate-dependent decarboxylation of 2-oxoglutarate and the subsequent addition of the resulting succinic semialdehyde-thiamine pyrophosphate anion to isochorismate to yield 2-succinyl-5-enolpyruvyl-6-hydroxy-3-cyclohexene-1-carboxylate (SEPHCHC). The sequence is that of 2-succinyl-5-enolpyruvyl-6-hydroxy-3-cyclohexene-1-carboxylate synthase from Saccharopolyspora erythraea (strain ATCC 11635 / DSM 40517 / JCM 4748 / NBRC 13426 / NCIMB 8594 / NRRL 2338).